The following is a 63-amino-acid chain: SPbeta prophage-derived uncharacterized protein YomP (63 aa).

In Bacillus subtilis (strain 168), this protein is SPbeta prophage-derived uncharacterized protein YomP (yomP).